The following is a 492-amino-acid chain: N-succinylglutamate 5-semialdehyde dehydrogenase (492 aa).

220-225 (GSANTG) contributes to the NAD(+) binding site. Active-site residues include Glu-243 and Cys-277.

This sequence belongs to the aldehyde dehydrogenase family. AstD subfamily.

The enzyme catalyses N-succinyl-L-glutamate 5-semialdehyde + NAD(+) + H2O = N-succinyl-L-glutamate + NADH + 2 H(+). The protein operates within amino-acid degradation; L-arginine degradation via AST pathway; L-glutamate and succinate from L-arginine: step 4/5. Catalyzes the NAD-dependent reduction of succinylglutamate semialdehyde into succinylglutamate. The sequence is that of N-succinylglutamate 5-semialdehyde dehydrogenase from Escherichia coli O6:K15:H31 (strain 536 / UPEC).